We begin with the raw amino-acid sequence, 212 residues long: Uridine kinase (212 aa).

12–19 serves as a coordination point for ATP; it reads GGSGGGKT.

This sequence belongs to the uridine kinase family.

The protein resides in the cytoplasm. The catalysed reaction is uridine + ATP = UMP + ADP + H(+). It catalyses the reaction cytidine + ATP = CMP + ADP + H(+). Its pathway is pyrimidine metabolism; CTP biosynthesis via salvage pathway; CTP from cytidine: step 1/3. It functions in the pathway pyrimidine metabolism; UMP biosynthesis via salvage pathway; UMP from uridine: step 1/1. The protein is Uridine kinase of Streptococcus pneumoniae serotype 2 (strain D39 / NCTC 7466).